We begin with the raw amino-acid sequence, 181 residues long: ADP-ribosylation factor 2-A (181 aa).

Gly-2 carries N-myristoyl glycine lipidation. Residues 24-31, 67-71, and 126-129 each bind GTP; these read GLDAAGKT, DVGGQ, and NKQD.

It belongs to the small GTPase superfamily. Arf family.

Its subcellular location is the golgi apparatus. Its activity is regulated as follows. Activated by AGD10. Functionally, GTP-binding protein involved in protein trafficking; may modulate vesicle budding and uncoating within the Golgi apparatus. The sequence is that of ADP-ribosylation factor 2-A (ARF2-A) from Arabidopsis thaliana (Mouse-ear cress).